Here is a 220-residue protein sequence, read N- to C-terminus: Carbonic anhydrase (220 aa).

4 residues coordinate Zn(2+): C39, D41, H98, and C101.

Belongs to the beta-class carbonic anhydrase family. It depends on Zn(2+) as a cofactor.

It carries out the reaction hydrogencarbonate + H(+) = CO2 + H2O. The protein is Carbonic anhydrase (cynT) of Pseudomonas aeruginosa (strain ATCC 15692 / DSM 22644 / CIP 104116 / JCM 14847 / LMG 12228 / 1C / PRS 101 / PAO1).